A 597-amino-acid chain; its full sequence is Formate--tetrahydrofolate ligase (597 aa).

Residue 84-91 (TPLGEGKS) participates in ATP binding.

Belongs to the formate--tetrahydrofolate ligase family.

The catalysed reaction is (6S)-5,6,7,8-tetrahydrofolate + formate + ATP = (6R)-10-formyltetrahydrofolate + ADP + phosphate. Its pathway is one-carbon metabolism; tetrahydrofolate interconversion. The polypeptide is Formate--tetrahydrofolate ligase (Dehalococcoides mccartyi (strain ATCC BAA-2266 / KCTC 15142 / 195) (Dehalococcoides ethenogenes (strain 195))).